We begin with the raw amino-acid sequence, 317 residues long: Tyrosine--tRNA ligase (317 aa).

Residue Tyr-33 coordinates L-tyrosine. Positions 38 to 46 (PSGKIHMGH) match the 'HIGH' region motif. L-tyrosine-binding residues include Tyr-155, Gln-159, Asp-162, and Gln-177. A 'KMSKS' region motif is present at residues 211–215 (KMSSS). Ser-214 provides a ligand contact to ATP.

It belongs to the class-I aminoacyl-tRNA synthetase family. TyrS type 3 subfamily. Homodimer.

The protein localises to the cytoplasm. It catalyses the reaction tRNA(Tyr) + L-tyrosine + ATP = L-tyrosyl-tRNA(Tyr) + AMP + diphosphate + H(+). Functionally, catalyzes the attachment of tyrosine to tRNA(Tyr) in a two-step reaction: tyrosine is first activated by ATP to form Tyr-AMP and then transferred to the acceptor end of tRNA(Tyr). This chain is Tyrosine--tRNA ligase, found in Methanococcoides burtonii (strain DSM 6242 / NBRC 107633 / OCM 468 / ACE-M).